Consider the following 241-residue polypeptide: Proteasome subunit alpha (241 aa).

It belongs to the peptidase T1A family. The 20S proteasome core is composed of 14 alpha and 14 beta subunits that assemble into four stacked heptameric rings, resulting in a barrel-shaped structure. The two inner rings, each composed of seven catalytic beta subunits, are sandwiched by two outer rings, each composed of seven alpha subunits. The catalytic chamber with the active sites is on the inside of the barrel. Has a gated structure, the ends of the cylinder being occluded by the N-termini of the alpha-subunits. Is capped by the proteasome-associated ATPase, ARC.

It is found in the cytoplasm. Its pathway is protein degradation; proteasomal Pup-dependent pathway. The formation of the proteasomal ATPase ARC-20S proteasome complex, likely via the docking of the C-termini of ARC into the intersubunit pockets in the alpha-rings, may trigger opening of the gate for substrate entry. Interconversion between the open-gate and close-gate conformations leads to a dynamic regulation of the 20S proteasome proteolysis activity. In terms of biological role, component of the proteasome core, a large protease complex with broad specificity involved in protein degradation. The polypeptide is Proteasome subunit alpha (Frankia alni (strain DSM 45986 / CECT 9034 / ACN14a)).